The primary structure comprises 293 residues: Protease HtpX homolog (293 aa).

A run of 2 helical transmembrane segments spans residues 6–26 and 28–48; these read VAVM…LIGG and SGMV…YWNS. His130 contacts Zn(2+). Residue Glu131 is part of the active site. Residue His134 participates in Zn(2+) binding. Helical transmembrane passes span 145–165 and 172–192; these read LTAT…FFGG and PLGA…AMMV. Zn(2+) is bound at residue Glu201.

Belongs to the peptidase M48B family. Requires Zn(2+) as cofactor.

The protein localises to the cell inner membrane. The polypeptide is Protease HtpX homolog (Rhodospirillum rubrum (strain ATCC 11170 / ATH 1.1.1 / DSM 467 / LMG 4362 / NCIMB 8255 / S1)).